Consider the following 297-residue polypeptide: Bifunctional protein FolD (297 aa).

Residues 169–171, S196, and I237 each bind NADP(+); that span reads GRS.

The protein belongs to the tetrahydrofolate dehydrogenase/cyclohydrolase family. As to quaternary structure, homodimer.

The enzyme catalyses (6R)-5,10-methylene-5,6,7,8-tetrahydrofolate + NADP(+) = (6R)-5,10-methenyltetrahydrofolate + NADPH. The catalysed reaction is (6R)-5,10-methenyltetrahydrofolate + H2O = (6R)-10-formyltetrahydrofolate + H(+). The protein operates within one-carbon metabolism; tetrahydrofolate interconversion. In terms of biological role, catalyzes the oxidation of 5,10-methylenetetrahydrofolate to 5,10-methenyltetrahydrofolate and then the hydrolysis of 5,10-methenyltetrahydrofolate to 10-formyltetrahydrofolate. This chain is Bifunctional protein FolD, found in Salinibacter ruber (strain DSM 13855 / M31).